The primary structure comprises 216 residues: Protein Syd (216 aa).

The protein belongs to the Syd family.

The protein localises to the cell inner membrane. Its function is as follows. Interacts with the SecY protein in vivo. May bind preferentially to an uncomplexed state of SecY, thus functioning either as a chelating agent for excess SecY in the cell or as a regulatory factor that negatively controls the translocase function. This Shewanella sp. (strain MR-7) protein is Protein Syd.